A 508-amino-acid polypeptide reads, in one-letter code: Protein O-glucosyltransferase 3 (508 aa).

An N-terminal signal peptide occupies residues 1–24 (MLGVRRALLLPPLQLALLVAAGTG). The Filamin repeat unit spans residues 25-134 (ARVSAPRSLA…VAQSPYILKG (110 aa)). Asn307 is a glycosylation site (N-linked (GlcNAc...) asparagine). The interval 480 to 508 (RDGMERVPQPDDSTSVRQCHRKRPEREEL) is disordered. The Prevents secretion from ER signature appears at 505–508 (REEL).

Belongs to the KDELC family.

It localises to the endoplasmic reticulum lumen. It carries out the reaction L-seryl-[EGF-like domain protein] + UDP-alpha-D-glucose = 3-O-(beta-D-glucosyl)-L-seryl-[EGF-like domain protein] + UDP + H(+). The enzyme catalyses L-seryl-[EGF-like domain protein] + UDP-alpha-D-xylose = 3-O-(beta-D-xylosyl)-L-seryl-[EGF-like domain protein] + UDP + H(+). Its pathway is protein modification; protein glycosylation. Functionally, protein glucosyltransferase that catalyzes the transfer of glucose from UDP-glucose to a serine residue within the consensus sequence peptide C-X-N-T-X-G-S-F-X-C. Can also catalyze the transfer of xylose from UDP-xylose but less efficiently. Specifically targets extracellular EGF repeats of proteins such as NOTCH1, NOTCH3, FBN1, FBN2 and LTBP1. May regulate the transport of NOTCH1 and NOTCH3 to the plasma membrane and thereby the Notch signaling pathway. This is Protein O-glucosyltransferase 3 (Poglut3) from Rattus norvegicus (Rat).